The sequence spans 2211 residues: Norsolorinic acid synthase stcA (2211 aa).

Residues 11-251 form a starter unit:ACP transacylase (SAT) domain region; that stretch reads FLFGDQTYDF…REIPIYVPAH (241 aa). Residues 358 to 378 are disordered; the sequence is PAEPPTSINKTPERYSHRPGS. Residues 368–378 are compositionally biased toward basic and acidic residues; the sequence is TPERYSHRPGS. The 433-residue stretch at 380–812 folds into the Ketosynthase family 3 (KS3) domain; it reads RGKLAIVSMS…GGNTAVLVED (433 aa). Active-site for beta-ketoacyl synthase activity residues include Cys-552, His-687, and His-730. Residues 912 to 1201 are malonyl-CoA:ACP transacylase (MAT) domain; it reads IACSGQGSQY…MAGMIKTTLD (290 aa). Catalysis depends on Ser-1004, which acts as the For acyl/malonyl transferase activity. A disordered region spans residues 1289–1316; that stretch reads TATSDYQLPSDEQVAAKRPSKQDESKEA. The segment at 1327-1468 is N-terminal hotdog fold; sequence HRVVEEKTEP…CTVRFTSEAQ (142 aa). A PKS/mFAS DH domain is found at 1327 to 1643; the sequence is HRVVEEKTEP…LRRVPRRGLR (317 aa). Residues 1340 to 1643 form a product template (PT) domain region; sequence TLVVETDISR…LRRVPRRGLR (304 aa). Catalysis depends on His-1359, which acts as the Proton acceptor; for dehydratase activity. The C-terminal hotdog fold stretch occupies residues 1495–1643; sequence FIRYTTKSGY…LRRVPRRGLR (149 aa). Asp-1555 functions as the Proton donor; for dehydratase activity in the catalytic mechanism. The segment at 1655–1706 is disordered; that stretch reads RLHGNQQAVKTQAPQRAALKQKPQSSPTQPHASKVAYSRSATSPTAGKPVVA. Polar residues-rich tracts occupy residues 1658-1668 and 1676-1685; these read GNQQAVKTQAP and KPQSSPTQPH. Carrier domains follow at residues 1712 to 1791 and 1839 to 1915; these read REGD…SGSA and DELF…GTTS. Ser-1749 and Ser-1873 each carry O-(pantetheine 4'-phosphoryl)serine. Positions 1912–1926 are enriched in low complexity; that stretch reads GTTSGSTTGSSGSGS. The segment at 1912–1947 is disordered; that stretch reads GTTSGSTTGSSGSGSSEDETDSIPSTPEEYTTADTR. Residues 1934 to 1945 show a composition bias toward polar residues; it reads IPSTPEEYTTAD. Positions 1969 to 2205 are thioesterase/Claisen cyclase (TE/CLC) domain; sequence ILFMLPDGGG…KEHVYLVREL (237 aa). The For thioesterase activity role is filled by Ser-2039.

It depends on pantetheine 4'-phosphate as a cofactor.

It catalyses the reaction hexanoyl-[ACP] + 7 malonyl-CoA + 6 H(+) = noranthrone + holo-[ACP] + 7 CO2 + 7 CoA + 2 H2O. The protein operates within mycotoxin biosynthesis; sterigmatocystin biosynthesis. Its function is as follows. Non-reducing polyketide synthase; part of the gene cluster that mediates the biosynthesis of sterigmatocystin (ST), a polyketide-derived furanocoumarin which is part of the most toxic and carcinogenic compounds among the known mycotoxins. The first step in the biosynthesis of sterigmatocystin is the production of hexanoate by the fatty acid synthase (FAS) units stcJ and stcK. The polyketide backbone is assembled by the non-reducing polyketide synthase stcA by condensation of the starter hexanoyl-CoA and 7 malonyl-CoA extender units followed by cyclization and release of norsolorinic acid. Norsolorinic acid is the first stable intermediate in the biosynthesis of sterigmatocystin and is converted into averantin (AVN) by the ketoreductase stcE which reduces the hexanoate ketone to an alcohol. Averantin is then oxidized into 5'-hydroxyaverantin (HAVN) by the cytochrome P450 monooxygenase stcF. 5'-hydroxyaverantin is further converted to 5'-oxyaverantin (OAVN) by the 5'-hydroxyaverantin dehydrogenase stcG. The next step is the conversion of OAVN into averufin (AVF) which is catalyzed by a yet to be identified enzyme. The cytochrome P450 monooxygenase stcB and the flavin-binding monooxygenase stcW are both required for the conversion of averufin to 1-hydroxyversicolorone. The esterase stcI probably catalyzes the formation of versiconal hemiacetal acetate from 1-hydroxyversicolorone. The oxydoreductase stcN then probably catalyzes the biosynthetic step from versiconal to versicolorin B (VERB). The next step is performed by the versicolorin B desaturase stcL to produce versicolorin A (VERA). The ketoreductase stcU and the cytochrome P450 monooxygenase stcS are involved in the conversion of versicolorin A to demethylsterigmatocystin. The Baeyer-Villiger oxidas stcQ and the reductase stcR might be involved in the biosynthetic step from versicolorin A to demethylsterigmatocystin. The final step in the biosynthesis of sterigmatocystin is the methylation of demethylsterigmatocystin catalyzed by the methyltransferase stcP. This Emericella nidulans (strain FGSC A4 / ATCC 38163 / CBS 112.46 / NRRL 194 / M139) (Aspergillus nidulans) protein is Norsolorinic acid synthase stcA.